A 380-amino-acid chain; its full sequence is Cytochrome b (380 aa).

Helical transmembrane passes span 34–54, 78–99, 114–134, and 179–199; these read FGSL…LLAM, WLIR…FLHI, WNTG…GYVL, and FFAL…IHLT. His-84 and His-98 together coordinate heme b. Positions 183 and 197 each coordinate heme b. His-202 contacts a ubiquinone. Helical transmembrane passes span 227–247, 289–309, 321–341, and 348–368; these read IKDI…ALFS, LGGV…PFLH, LSQT…WIGS, and FIII…ILFP.

It belongs to the cytochrome b family. As to quaternary structure, the cytochrome bc1 complex contains 11 subunits: 3 respiratory subunits (MT-CYB, CYC1 and UQCRFS1), 2 core proteins (UQCRC1 and UQCRC2) and 6 low-molecular weight proteins (UQCRH/QCR6, UQCRB/QCR7, UQCRQ/QCR8, UQCR10/QCR9, UQCR11/QCR10 and a cleavage product of UQCRFS1). This cytochrome bc1 complex then forms a dimer. Heme b serves as cofactor.

The protein resides in the mitochondrion inner membrane. Functionally, component of the ubiquinol-cytochrome c reductase complex (complex III or cytochrome b-c1 complex) that is part of the mitochondrial respiratory chain. The b-c1 complex mediates electron transfer from ubiquinol to cytochrome c. Contributes to the generation of a proton gradient across the mitochondrial membrane that is then used for ATP synthesis. This Alectoris rufa (Red-legged partridge) protein is Cytochrome b (MT-CYB).